Reading from the N-terminus, the 366-residue chain is uncharacterized protein (366 aa).

Residues 64-289 (GTVGFIGFPS…LKETMWDYLN (226 aa)) form the OBG-type G domain. GTP-binding positions include 70–77 (GFPSVGKS), 116–120 (DLPGI), and 247–250 (NKID). Residues 289 to 365 (NLVRVYTRPR…LDEDVVTIVK (77 aa)) enclose the TGS domain.

Belongs to the TRAFAC class OBG-HflX-like GTPase superfamily. OBG GTPase family.

This is an uncharacterized protein from Schizosaccharomyces pombe (strain 972 / ATCC 24843) (Fission yeast).